The sequence spans 606 residues: Transmembrane 9 superfamily member 1 (606 aa).

Residues 1-27 (MTVLGHPRSWSCRWWPLLLLLLLTGRE) form the signal peptide. N-linked (GlcNAc...) asparagine glycosylation occurs at asparagine 178. 4 helical membrane-spanning segments follow: residues 237 to 257 (LSII…AVIL), 310 to 330 (VLGV…MALL), 339 to 359 (GAIN…SGYV), and 373 to 393 (VWNI…TWSV). An N-linked (GlcNAc...) asparagine glycan is attached at asparagine 401. Transmembrane regions (helical) follow at residues 412-432 (ILLL…IGGI), 469-489 (VGGF…FATV), 499-519 (GILF…SIAL), and 535-555 (SVLS…FYYA). Asparagine 559 carries N-linked (GlcNAc...) asparagine glycosylation. The chain crosses the membrane as a helical span at residues 570–590 (FGYSLLTGYVFFLMLGTISFF).

The protein belongs to the nonaspanin (TM9SF) (TC 9.A.2) family.

It is found in the lysosome membrane. It localises to the cytoplasmic vesicle. Its subcellular location is the autophagosome membrane. Plays an essential role in autophagy. The polypeptide is Transmembrane 9 superfamily member 1 (TM9SF1) (Bos taurus (Bovine)).